A 219-amino-acid chain; its full sequence is ATP-dependent Clp protease proteolytic subunit (219 aa).

The tract at residues 1–22 (MPVGVPKVPFLNPNPDPEPDSV) is disordered. Residue serine 116 is the Nucleophile of the active site. The active site involves histidine 141.

It belongs to the peptidase S14 family. Component of the chloroplastic Clp protease core complex.

The protein resides in the plastid. The protein localises to the chloroplast stroma. The enzyme catalyses Hydrolysis of proteins to small peptides in the presence of ATP and magnesium. alpha-casein is the usual test substrate. In the absence of ATP, only oligopeptides shorter than five residues are hydrolyzed (such as succinyl-Leu-Tyr-|-NHMec, and Leu-Tyr-Leu-|-Tyr-Trp, in which cleavage of the -Tyr-|-Leu- and -Tyr-|-Trp bonds also occurs).. Functionally, cleaves peptides in various proteins in a process that requires ATP hydrolysis. Has a chymotrypsin-like activity. Plays a major role in the degradation of misfolded proteins. The chain is ATP-dependent Clp protease proteolytic subunit from Pelargonium hortorum (Common geranium).